A 447-amino-acid chain; its full sequence is FAD-dependent monooxygenase tropB (447 aa).

The helical transmembrane segment at 12 to 32 (PLSVGIVGGGIIGVILAAGLV) threads the bilayer. FAD is bound by residues Glu42, Ala55, and Arg124. N-linked (GlcNAc...) asparagine glycosylation occurs at Asn153. Active-site residues include Arg206 and Tyr239. N-linked (GlcNAc...) asparagine glycosylation occurs at Asn243. The FAD site is built by Asp322 and Ala335.

Belongs to the paxM FAD-dependent monooxygenase family. The cofactor is FAD.

Its subcellular location is the membrane. Its pathway is secondary metabolite biosynthesis. FAD-dependent monooxygenase; part of the gene cluster that mediates the biosynthesis of the tropolone class of fungal maleic anhydrides. Within the pathway, tropB catalyzes a synthetically challenging asymmetric oxidative dearomatization reaction to convert 3-methylorcinaldehyde into a hydroxycyclohexadione. The pathway begins with the synthesis of 3-methylorcinaldehyde by the non-reducing polyketide synthase (PKS) tropA. 3-methylorcinaldehyde is the substrate for the FAD-dependent monooxygenase tropB to yield a dearomatized hydroxycyclohexadione. The 2-oxoglutarate-dependent dioxygenase tropC then performs the oxidative ring expansion to provide the first tropolone metabolite stipitaldehyde. Trop D converts stipitaldehyde into stipitacetal which is in turn converted to stipitalide by the short-chain dehydrogenase/reductase tropE. The next steps involve tropF, tropG, tropH, tropI and tropJ to form successive tropolone maleic anhydrides including stipitaldehydic, stipitatonic and stipitatic acids. The protein is FAD-dependent monooxygenase tropB of Talaromyces stipitatus (strain ATCC 10500 / CBS 375.48 / QM 6759 / NRRL 1006) (Penicillium stipitatum).